Here is a 258-residue protein sequence, read N- to C-terminus: Protein UL24 homolog (258 aa).

The protein belongs to the herpesviridae UL24 family.

Its subcellular location is the virion. It is found in the host cytoplasm. The protein localises to the host nucleus. It localises to the host nucleolus. The protein resides in the host Golgi apparatus. Functionally, may participate in nuclear egress of viral particles. Plays a role in the dispersal of several host nucleolar proteins including NCL/nucleolin and NPM1. Since deletion of host NCL/nucleolin negatively impact on nuclear egress, UL24 supposedly acts on this process through its effect on host nucleoli. The polypeptide is Protein UL24 homolog (Varicella-zoster virus (strain Dumas) (HHV-3)).